A 389-amino-acid polypeptide reads, in one-letter code: Cytochrome b (389 aa).

4 helical membrane-spanning segments follow: residues 32–52 (FGSL…FLAM), 76–98 (YILR…VHIG), 113–133 (LWSI…LGYV), and 179–199 (FFSL…AHMI). Histidine 82 and histidine 96 together coordinate heme b. Positions 183 and 197 each coordinate heme b. Histidine 202 lines the a ubiquinone pocket. 4 helical membrane passes run 225–245 (FIFK…IIVF), 289–309 (LLGV…PFVD), 322–342 (INMV…LVGA), and 349–369 (FIFL…VIVP).

It belongs to the cytochrome b family. Fungal cytochrome b-c1 complex contains 10 subunits; 3 respiratory subunits, 2 core proteins and 5 low-molecular weight proteins. Cytochrome b-c1 complex is a homodimer. Heme b is required as a cofactor.

It localises to the mitochondrion inner membrane. Its function is as follows. Component of the ubiquinol-cytochrome c reductase complex (complex III or cytochrome b-c1 complex) that is part of the mitochondrial respiratory chain. The b-c1 complex mediates electron transfer from ubiquinol to cytochrome c. Contributes to the generation of a proton gradient across the mitochondrial membrane that is then used for ATP synthesis. The sequence is that of Cytochrome b (COB) from Mycena viridimarginata.